Consider the following 346-residue polypeptide: 4-hydroxy-2-oxovalerate aldolase 2 (346 aa).

Residues 8–258 (VTLVDTTLRD…HTGVELFPLI (251 aa)) form the Pyruvate carboxyltransferase domain. Residues 16 to 17 (RD), Ser170, and His197 contribute to the substrate site. Asp17 contributes to the Mn(2+) binding site. The Mn(2+) site is built by His197 and His199. Tyr288 contacts substrate.

The protein belongs to the 4-hydroxy-2-oxovalerate aldolase family.

It catalyses the reaction (S)-4-hydroxy-2-oxopentanoate = acetaldehyde + pyruvate. This Nocardia farcinica (strain IFM 10152) protein is 4-hydroxy-2-oxovalerate aldolase 2.